Consider the following 378-residue polypeptide: Alpha-galactosidase (378 aa).

An N-terminal signal peptide occupies residues 1-15; that stretch reads MVKSPGTEDYTRRSL. Disulfide bonds link Cys36-Cys68 and Cys116-Cys147. Asp145 (nucleophile) is an active-site residue. 178-182 lines the substrate pocket; sequence EWGEE. The active-site Proton donor is the Asp200.

It belongs to the glycosyl hydrolase 27 family.

The catalysed reaction is Hydrolysis of terminal, non-reducing alpha-D-galactose residues in alpha-D-galactosides, including galactose oligosaccharides, galactomannans and galactolipids.. Preferentially cleaves alpha-1,3 and alpha-1,4 glycoside linkages. Involved in the hydrolysis of the galactomannan, it splits alpha-linked galactose moieties. It is particularly suitable for the hydrolysis of guar gum to a gum with improved gelling properties. Can cleave terminal alpha-1,3-linked galactose residues responsible for blood group B specificity from the surface of erythrocytes thereby converting these cells serologically to group O. In Coffea arabica (Arabian coffee), this protein is Alpha-galactosidase.